Consider the following 507-residue polypeptide: Serine hydroxymethyltransferase (507 aa).

N6-(pyridoxal phosphate)lysine is present on K283.

The protein belongs to the SHMT family. As to quaternary structure, homotetramer. It depends on pyridoxal 5'-phosphate as a cofactor.

It carries out the reaction (6R)-5,10-methylene-5,6,7,8-tetrahydrofolate + glycine + H2O = (6S)-5,6,7,8-tetrahydrofolate + L-serine. Its pathway is one-carbon metabolism; tetrahydrofolate interconversion. Functionally, interconversion of serine and glycine. This Caenorhabditis elegans protein is Serine hydroxymethyltransferase (mel-32).